Here is a 576-residue protein sequence, read N- to C-terminus: Non-neuronal cytoplasmic intermediate filament protein (576 aa).

Positions 1 to 51 (MTSKISTTYEEEGRQSKIQPRAFVITRSGPSSKSSSFSARQSYASSRQSIT) are disordered. Positions 2-75 (TSKISTTYEE…FRGTREKEKR (74 aa)) are head. Positions 28–49 (SGPSSKSSSFSARQSYASSRQS) are enriched in low complexity. The IF rod domain maps to 73-425 (EKREMQNLNE…KLLEGEESRV (353 aa)). Residues 76–108 (EMQNLNERLASYIEKVHFLDAQVKKLEAENEAL) form a coil 1A region. Residues 109-122 (RNRKSESLQPIRDA) form a linker 1 region. The tract at residues 123 to 260 (YENELAQARK…DLLDQLELLK (138 aa)) is coil 1B. The interval 261–278 (PEPIQIKGMDYAEFWKSE) is linker 2. The interval 279–425 (LSKCVREIQS…KLLEGEESRV (147 aa)) is coil 2. The segment at 426 to 576 (GLRSLVEQAI…KATLIAKFSG (151 aa)) is tail. In terms of domain architecture, LTD spans 456–574 (GSMTIQRSSK…NEKATLIAKF (119 aa)).

Belongs to the intermediate filament family. Can form homopolymers.

Its subcellular location is the cytoplasm. The sequence is that of Non-neuronal cytoplasmic intermediate filament protein from Cornu aspersum (Brown garden snail).